We begin with the raw amino-acid sequence, 391 residues long: Lipoyl synthase, mitochondrial (391 aa).

The transit peptide at 1-44 (MVHPHLSRTKRTFFSHSSQMISRHIRKTNSLAFVRALSASETAV) directs the protein to the mitochondrion. [4Fe-4S] cluster-binding residues include cysteine 120, cysteine 125, cysteine 131, cysteine 150, cysteine 154, cysteine 157, and serine 365. The Radical SAM core domain occupies 135 to 354 (KKSEATATIM…KEVALEMGFL (220 aa)).

This sequence belongs to the radical SAM superfamily. Lipoyl synthase family. It depends on [4Fe-4S] cluster as a cofactor.

The protein localises to the mitochondrion. The catalysed reaction is [[Fe-S] cluster scaffold protein carrying a second [4Fe-4S](2+) cluster] + N(6)-octanoyl-L-lysyl-[protein] + 2 oxidized [2Fe-2S]-[ferredoxin] + 2 S-adenosyl-L-methionine + 4 H(+) = [[Fe-S] cluster scaffold protein] + N(6)-[(R)-dihydrolipoyl]-L-lysyl-[protein] + 4 Fe(3+) + 2 hydrogen sulfide + 2 5'-deoxyadenosine + 2 L-methionine + 2 reduced [2Fe-2S]-[ferredoxin]. The protein operates within protein modification; protein lipoylation via endogenous pathway; protein N(6)-(lipoyl)lysine from octanoyl-[acyl-carrier-protein]: step 2/2. Its function is as follows. Catalyzes the radical-mediated insertion of two sulfur atoms into the C-6 and C-8 positions of the octanoyl moiety bound to the lipoyl domains of lipoate-dependent enzymes, thereby converting the octanoylated domains into lipoylated derivatives. In Clavispora lusitaniae (strain ATCC 42720) (Yeast), this protein is Lipoyl synthase, mitochondrial.